The chain runs to 235 residues: Phosphoribosylaminoimidazole-succinocarboxamide synthase (235 aa).

It belongs to the SAICAR synthetase family.

The catalysed reaction is 5-amino-1-(5-phospho-D-ribosyl)imidazole-4-carboxylate + L-aspartate + ATP = (2S)-2-[5-amino-1-(5-phospho-beta-D-ribosyl)imidazole-4-carboxamido]succinate + ADP + phosphate + 2 H(+). Its pathway is purine metabolism; IMP biosynthesis via de novo pathway; 5-amino-1-(5-phospho-D-ribosyl)imidazole-4-carboxamide from 5-amino-1-(5-phospho-D-ribosyl)imidazole-4-carboxylate: step 1/2. This is Phosphoribosylaminoimidazole-succinocarboxamide synthase from Streptococcus pneumoniae (strain ATCC 700669 / Spain 23F-1).